The chain runs to 285 residues: Glutamate racemase (285 aa).

Substrate-binding positions include 28-29 (DS) and 60-61 (YG). Cys-92 acts as the Proton donor/acceptor in catalysis. 93-94 (NT) lines the substrate pocket. The Proton donor/acceptor role is filled by Cys-204. 205-206 (TH) contacts substrate.

This sequence belongs to the aspartate/glutamate racemases family.

The enzyme catalyses L-glutamate = D-glutamate. It functions in the pathway cell wall biogenesis; peptidoglycan biosynthesis. Its function is as follows. Provides the (R)-glutamate required for cell wall biosynthesis. In Shigella flexneri serotype 5b (strain 8401), this protein is Glutamate racemase.